We begin with the raw amino-acid sequence, 651 residues long: Bromodomain-containing protein 7 (651 aa).

Residue Lys-21 forms a Glycyl lysine isopeptide (Lys-Gly) (interchain with G-Cter in SUMO2) linkage. The segment covering 35 to 45 (TELSTGSSGHD) has biased composition (polar residues). The interval 35 to 132 (TELSTGSSGH…SSLAKQEEVE (98 aa)) is disordered. The span at 47-57 (SLFEDKNDHDK) shows a compositional bias: basic and acidic residues. A Glycyl lysine isopeptide (Lys-Gly) (interchain with G-Cter in SUMO2) cross-link involves residue Lys-52. Basic residues predominate over residues 58–69 (HKDRKRKKRKKG). Positions 65-96 (KRKKGEKQIPGEEKGRKRRRVKEDKKKRDRDR) match the Nuclear localization signal motif. Residues 70–106 (EKQIPGEEKGRKRRRVKEDKKKRDRDRVENEAEKDLQ) are compositionally biased toward basic and acidic residues. Glycyl lysine isopeptide (Lys-Gly) (interchain with G-Cter in SUMO2) cross-links involve residues Lys-127, Lys-186, Lys-197, Lys-201, Lys-212, and Lys-241. Residues 131 to 235 (VEQTPLQEAL…HSGMKILSQE (105 aa)) form the Bromo domain. The interval 253–301 (TRKQKDGTDTSQSGEDGGCWQREREDSGDAEAHAFKSPSKENKKKDKDM) is disordered. The span at 273–301 (QREREDSGDAEAHAFKSPSKENKKKDKDM) shows a compositional bias: basic and acidic residues. 2 positions are modified to phosphoserine: Ser-279 and Ser-289. Glycyl lysine isopeptide (Lys-Gly) (interchain with G-Cter in SUMO2) cross-links involve residues Lys-305 and Lys-307. Lys-328 carries the N6-acetyllysine modification. Lys-344 is covalently cross-linked (Glycyl lysine isopeptide (Lys-Gly) (interchain with G-Cter in SUMO2)). Phosphoserine is present on Ser-380. Lys-389 participates in a covalent cross-link: Glycyl lysine isopeptide (Lys-Gly) (interchain with G-Cter in SUMO2). Phosphoserine is present on Ser-482. Residue Thr-514 is modified to Phosphothreonine. Residues 536–567 (SEEAEIFQKKLDETTRLLRELQEAQNERLSTR) adopt a coiled-coil conformation. Phosphoserine is present on Ser-621.

As to quaternary structure, interacts with TRIM24, PTPN13 and DVL1. Identified in a complex with SMARCA4/BRG1, SMARCC1/BAF155, SMARCE1/BAF57, DPF2/BAF45D and ARID2, subunits of the SWI/SNF-B (PBAF) chromatin remodeling complex. Interacts with IRF2 and HNRPUL1. Interacts (via N-terminus) with TP53. Interacts (via C-terminus) with EP300. Interacts with BRCA1. Interacts (via bromo domain) with histone H3 (via N-terminus) acetylated at 'Lys-14' (H3K14ac). Has low affinity for histone H3 acetylated at 'Lys-9' (H3K9ac). Has the highest affinity for histone H3 that is acetylated both at 'Lys-9' (H3K9ac) and at 'Lys-14' (H3K14ac). Has very low affinity for non-acetylated histone H3. Interacts (via bromo domain) with histone H4 (via N-terminus) acetylated at 'Lys-8' (H3K8ac) (in vitro).

It localises to the nucleus. The protein resides in the chromosome. Functionally, acts both as coactivator and as corepressor. May play a role in chromatin remodeling. Activator of the Wnt signaling pathway in a DVL1-dependent manner by negatively regulating the GSK3B phosphotransferase activity. Induces dephosphorylation of GSK3B at 'Tyr-216'. Down-regulates TRIM24-mediated activation of transcriptional activation by AR. Transcriptional corepressor that down-regulates the expression of target genes. Binds to target promoters, leading to increased histone H3 acetylation at 'Lys-9' (H3K9ac). Binds to the ESR1 promoter. Recruits BRCA1 and POU2F1 to the ESR1 promoter. Coactivator for TP53-mediated activation of transcription of a set of target genes. Required for TP53-mediated cell-cycle arrest in response to oncogene activation. Promotes acetylation of TP53 at 'Lys-382', and thereby promotes efficient recruitment of TP53 to target promoters. Inhibits cell cycle progression from G1 to S phase. This is Bromodomain-containing protein 7 (BRD7) from Homo sapiens (Human).